The sequence spans 318 residues: Small ribosomal subunit protein RACK1 (318 aa).

WD repeat units follow at residues 11 to 44 (GHRG…LSWG), 65 to 95 (GHSA…RLWN), 107 to 137 (GHTK…RVWN), 150 to 182 (AHTD…KVWD), 194 to 224 (GHTN…RLWD), 235 to 264 (AAGA…RIFD), and 282 to 315 (KKIV…WGVS).

It belongs to the WD repeat G protein beta family. Ribosomal protein RACK1 subfamily.

This Trypanosoma brucei brucei protein is Small ribosomal subunit protein RACK1.